The sequence spans 229 residues: Non-structural protein V (229 aa).

Composition is skewed to polar residues over residues alanine 30–threonine 46 and glycine 82–proline 112. The interval alanine 30–proline 112 is disordered. Zn(2+)-binding residues include histidine 178, cysteine 197, cysteine 201, cysteine 213, cysteine 215, cysteine 218, cysteine 222, and cysteine 225.

This sequence belongs to the paramyxoviruses V protein family.

Blocks host interferon signaling. The protein is Non-structural protein V (P/V) of Homo sapiens (Human).